The chain runs to 313 residues: tRNA dimethylallyltransferase (313 aa).

11–18 (GPTAAGKS) contacts ATP. 13–18 (TAAGKS) contributes to the substrate binding site. Interaction with substrate tRNA regions lie at residues 36–39 (DSAT), 160–164 (QRIQR), and 244–249 (RCVGYR).

The protein belongs to the IPP transferase family. As to quaternary structure, monomer. Mg(2+) is required as a cofactor.

It catalyses the reaction adenosine(37) in tRNA + dimethylallyl diphosphate = N(6)-dimethylallyladenosine(37) in tRNA + diphosphate. In terms of biological role, catalyzes the transfer of a dimethylallyl group onto the adenine at position 37 in tRNAs that read codons beginning with uridine, leading to the formation of N6-(dimethylallyl)adenosine (i(6)A). The protein is tRNA dimethylallyltransferase of Bordetella parapertussis (strain 12822 / ATCC BAA-587 / NCTC 13253).